The primary structure comprises 2532 residues: Lovastatin diketide synthase lovF (2532 aa).

The region spanning 10 to 430 (PAPIAMVGMG…GANAHAIVEQ (421 aa)) is the Ketosynthase family 3 (KS3) domain. Residues C183, H318, and H353 each act as for beta-ketoacyl synthase activity in the active site. The interval 545–870 (VFTGQGAQWF…PYLSCLSRGK (326 aa)) is malonyl-CoA:ACP transacylase (MAT) domain. Residue S635 is the For malonyltransferase activity of the active site. Residues 941–1078 (HDLIGLQEPL…GLVRAEMDQP (138 aa)) are N-terminal hotdog fold. Residues 941-1246 (HDLIGLQEPL…LEGLVFQSLG (306 aa)) are dehydratase (DH) domain. Residues 941-1251 (HDLIGLQEPL…FQSLGASLGT (311 aa)) form the PKS/mFAS DH domain. H973 serves as the catalytic Proton acceptor; for dehydratase activity. The tract at residues 1075-1094 (MDQPPSSLSNQQRIDPRPWS) is disordered. Residues 1078 to 1087 (PPSSLSNQQR) show a composition bias toward polar residues. Residues 1092 to 1251 (PWSRKTAPQE…FQSLGASLGT (160 aa)) form a C-terminal hotdog fold region. D1159 (proton donor; for dehydratase activity) is an active-site residue. A methyltransferase (CMet) domain region spans residues 1423–1607 (ELVRLCCHKN…ARDCDSHEFY (185 aa)). Residues 1825–2144 (GLLDSLHFTK…SGQHVGKIVV (320 aa)) form an enoylreductase (ER) domain region. Residues 2168–2340 (SYLVAGGLGG…AVTIDLGMVQ (173 aa)) form a ketoreductase (KR) domain region. One can recognise a Carrier domain in the interval 2453–2530 (ESIAVIMEAM…KVAEVVLQRY (78 aa)). S2490 carries the O-(pantetheine 4'-phosphoryl)serine modification.

In terms of assembly, interacts with LovD. Pantetheine 4'-phosphate serves as cofactor.

The catalysed reaction is holo-[2-methylbutanoate polyketide synthase] + 2 malonyl-CoA + S-adenosyl-L-methionine + 2 NADPH + 3 H(+) = (S)-2-methylbutanoyl-[2-methylbutanoate polyketide synthase] + S-adenosyl-L-homocysteine + 2 CO2 + 2 NADP(+) + 2 CoA + H2O. The protein operates within polyketide biosynthesis; lovastatin biosynthesis. Functionally, lovastatin diketide synthase; part of the gene cluster that mediates the biosynthesis of lovastatin (also known as mevinolin, mevacor or monacolin K), a hypolipidemic inhibitor of (3S)-hydroxymethylglutaryl-coenzyme A (HMG-CoA) reductase (HMGR). The first step in the biosynthesis of lovastatin is the production of dihydromonacolin L acid by the lovastatin nonaketide synthase lovB and the trans-acting enoyl reductase lovC via condensation of one acetyl-CoA unit and 8 malonyl-CoA units. Dihydromonacolin L acid is released from lovB by the thioesterase lovG. Next, dihydromonacolin L acid is oxidized by the dihydromonacolin L monooxygenase lovA twice to form monacolin J acid. The 2-methylbutyrate moiety of lovastatin is synthesized by the lovastatin diketide synthase lovF via condensation of one acetyl-CoA unit and one malonyl-CoA unit. Finally, the covalent attachment of this moiety to monacolin J acid is catalyzed by the transesterase lovD to yield lovastatin. LovD has broad substrate specificity and can also convert monacolin J to simvastatin using alpha-dimethylbutanoyl-S-methyl-3-mercaptopropionate (DMB-S-MMP) as the thioester acyl donor, and can also catalyze the reverse reaction and function as hydrolase in vitro. LovD has much higher activity with LovF-bound 2-methylbutanoate than with free diketide substrates. The polypeptide is Lovastatin diketide synthase lovF (Aspergillus terreus).